A 497-amino-acid chain; its full sequence is NADH-quinone oxidoreductase subunit N (497 aa).

The next 14 membrane-spanning stretches (helical) occupy residues 14–34 (LMAM…MLSI), 45–65 (SLTV…WGLF), 86–106 (IFYS…AYPW), 116–136 (EFYL…SAQH), 137–157 (LAAV…LLGY), 171–191 (YFVL…MLYA), 215–235 (ILAG…LVPF), 253–273 (FLGT…FLYV), 281–301 (LNTA…LMAL), 309–329 (LLGY…IALH), 338–358 (VAVY…VVSL), 385–405 (AAVM…LGFI), 420–439 (WVLT…YYLR), and 461–481 (AFTA…VFGI).

Belongs to the complex I subunit 2 family. In terms of assembly, NDH-1 is composed of 13 different subunits. Subunits NuoA, H, J, K, L, M, N constitute the membrane sector of the complex.

Its subcellular location is the cell membrane. The catalysed reaction is a quinone + NADH + 5 H(+)(in) = a quinol + NAD(+) + 4 H(+)(out). Its function is as follows. NDH-1 shuttles electrons from NADH, via FMN and iron-sulfur (Fe-S) centers, to quinones in the respiratory chain. The immediate electron acceptor for the enzyme in this species is believed to be ubiquinone. Couples the redox reaction to proton translocation (for every two electrons transferred, four hydrogen ions are translocated across the cytoplasmic membrane), and thus conserves the redox energy in a proton gradient. In Hamiltonella defensa subsp. Acyrthosiphon pisum (strain 5AT), this protein is NADH-quinone oxidoreductase subunit N.